The primary structure comprises 145 residues: uncharacterized protein (145 aa).

The interval 37-123 is disordered; the sequence is GKGTNTAKSS…MDREASYFAP (87 aa). The span at 38–63 shows a compositional bias: polar residues; that stretch reads KGTNTAKSSGGNNGTNLNAKRSNTTQ.

This is an uncharacterized protein from Caenorhabditis elegans.